The sequence spans 275 residues: Orotidine 5'-phosphate decarboxylase (275 aa).

Lysine 101 acts as the Proton donor in catalysis.

This sequence belongs to the OMP decarboxylase family. Type 2 subfamily.

The enzyme catalyses orotidine 5'-phosphate + H(+) = UMP + CO2. It functions in the pathway pyrimidine metabolism; UMP biosynthesis via de novo pathway; UMP from orotate: step 2/2. The polypeptide is Orotidine 5'-phosphate decarboxylase (Leptospira interrogans serogroup Icterohaemorrhagiae serovar Lai (strain 56601)).